The chain runs to 351 residues: Magnesium-protoporphyrin IX monomethyl ester [oxidative] cyclase 1 (351 aa).

The protein belongs to the AcsF family. Fe cation serves as cofactor.

It carries out the reaction Mg-protoporphyrin IX 13-monomethyl ester + 3 NADPH + 3 O2 + 2 H(+) = 3,8-divinyl protochlorophyllide a + 3 NADP(+) + 5 H2O. The protein operates within porphyrin-containing compound metabolism; chlorophyll biosynthesis (light-independent). Catalyzes the formation of the isocyclic ring in chlorophyll biosynthesis. Mediates the cyclase reaction, which results in the formation of divinylprotochlorophyllide (Pchlide) characteristic of all chlorophylls from magnesium-protoporphyrin IX 13-monomethyl ester (MgPMME). The sequence is that of Magnesium-protoporphyrin IX monomethyl ester [oxidative] cyclase 1 from Nostoc sp. (strain PCC 7120 / SAG 25.82 / UTEX 2576).